Here is a 901-residue protein sequence, read N- to C-terminus: MLIPSKLSRPVRLDHTVVRERLLAKLSGANNFRLALITSPAGYGKTTLISQWAAGKNDIGWYSLDEGDNQQERFASYLIAAVQQATNGHCAICETMAQKRQYASLTSLFAQLFIELAEWHSPLYLVIDDYHLITNPVIHESMRFFIRHQPENLTLVVLSRNLPQLGIANLRVRDQLLEIGSQQLAFTHQEAKQFFDCRLSSPIEAAESSRICDDVSGWATALQLIALSARQNTHSAHKSARRLAGINASHLSDYLVDEVLDNVDLATRHFLLKSAILRSMNDALITRVTGEENGQMRLEEIERQGLFLQRMDDTGEWFCYHPLFGNFLRQRCQWELAAELPEIHRAAAESWMAQGFPSEAIHHALAAGDALMLRDILLNHAWSLFNHSELSLLEESLKALPWDSLLENPQLVLLQAWLMQSQHRYGEVNTLLARAEHEIKDIREGTMHAEFNALRAQVAINDGNPDEAERLAKLALEELPPGWFYSRIVATSVLGEVLHCKGELTRSLALMQQTEQMARQHDVWHYALWSLIQQSEILFAQGFLQTAWETQEKAFQLINEQHLEQLPMHEFLVRIRAQLLWAWARLDEAEASARSGIEVLSSYQPQQQLQCLAMLIQCSLARGDLDNARSQLNRLENLLGNGKYHSDWISNANKVRVIYWQMTGDKAAAANWLRHTAKPEFANNHFLQGQWRNIARAQILLGEFESAEIVLEELNENARSLRLMSDLNRNLLLLNQLYWQAGRKSDAQRVLLDALKLANRTGFISHFVIEGEAMAQQLRQLIQLNTLPELEQHRAQRILREINQHHRHKFAHFDENFVERLLNHPEVPELIRTSPLTQREWQVLGLIYSGYSNEQIAGELEVAATTIKTHIRNLYQKLGVAHRQAAVQHAQKLLKMMGYGV.

An ATP-binding site is contributed by 39 to 46 (SPAGYGKT). An HTH luxR-type domain is found at 829-894 (ELIRTSPLTQ…AAVQHAQKLL (66 aa)). A DNA-binding region (H-T-H motif) is located at residues 853 to 872 (NEQIAGELEVAATTIKTHIR).

This sequence belongs to the MalT family. As to quaternary structure, monomer in solution. Oligomerizes to an active state in the presence of the positive effectors ATP and maltotriose.

Activated by ATP and maltotriose, which are both required for DNA binding. In terms of biological role, positively regulates the transcription of the maltose regulon whose gene products are responsible for uptake and catabolism of malto-oligosaccharides. Specifically binds to the promoter region of its target genes, recognizing a short DNA motif called the MalT box. This chain is HTH-type transcriptional regulator MalT, found in Escherichia coli O45:K1 (strain S88 / ExPEC).